A 92-amino-acid chain; its full sequence is CRISPR-associated endoribonuclease Cas2 2 (92 aa).

D12 lines the Mg(2+) pocket.

The protein belongs to the CRISPR-associated endoribonuclease Cas2 protein family. In terms of assembly, homodimer, forms a heterotetramer with a Cas1 homodimer. Mg(2+) serves as cofactor.

Functionally, CRISPR (clustered regularly interspaced short palindromic repeat), is an adaptive immune system that provides protection against mobile genetic elements (viruses, transposable elements and conjugative plasmids). CRISPR clusters contain sequences complementary to antecedent mobile elements and target invading nucleic acids. CRISPR clusters are transcribed and processed into CRISPR RNA (crRNA). Functions as a ssRNA-specific endoribonuclease. Involved in the integration of spacer DNA into the CRISPR cassette. This is CRISPR-associated endoribonuclease Cas2 2 (cas22) from Archaeoglobus fulgidus (strain ATCC 49558 / DSM 4304 / JCM 9628 / NBRC 100126 / VC-16).